We begin with the raw amino-acid sequence, 349 residues long: MPFTQFLDKYSDNLAIQYAIIFALLLGVFKLTVFSLKFASLIYDIFLAPATDFSKYGAASGKWAVVTGASDGIGKEYAFQLAKKGFSIVLVSRTQSKLELIATEIESKYKVNTKIVAFDASTDDEENYLKLEKAVFDLPVTILINNVGQSHSIPVPFLKTEKKELKDIITINTTATLRITQIVAPIIVSTVENPHPKQLRGLILTMGSFGGLLPTPYLATYSGSKSFLQAWSAALAGELQADHVDVELVISYLVASAMSKIKRTSLSIPNPKQFVTSTLNGVGRRNGAQERFATSTPYWTHALMHFAIDNTVGVYSKIANKLNLQMHQSIRRRALKKAARLAAAAEKKD.

A helical transmembrane segment spans residues 19-39; sequence AIIFALLLGVFKLTVFSLKFA. NADP(+) contacts are provided by Val65, Asp119, Asn146, Tyr221, Lys225, Val254, and Ser256. Residue Tyr221 is the Proton donor of the active site. Lys225 (lowers pKa of active site Tyr) is an active-site residue.

The protein belongs to the short-chain dehydrogenases/reductases (SDR) family.

The protein localises to the endoplasmic reticulum membrane. The enzyme catalyses a very-long-chain (3R)-3-hydroxyacyl-CoA + NADP(+) = a very-long-chain 3-oxoacyl-CoA + NADPH + H(+). It participates in lipid metabolism; fatty acid biosynthesis. Component of the microsomal membrane bound fatty acid elongation system, which produces the 26-carbon very long-chain fatty acids (VLCFA) from palmitate. Catalyzes the reduction of the 3-ketoacyl-CoA intermediate that is formed in each cycle of fatty acid elongation. VLCFAs serve as precursors for ceramide and sphingolipids. In Candida albicans (strain SC5314 / ATCC MYA-2876) (Yeast), this protein is Very-long-chain 3-oxoacyl-CoA reductase.